The primary structure comprises 918 residues: Chitin synthase C (918 aa).

Positions 1–63 (MSYNRLGDPY…EMPSSDRLAE (63 aa)) are disordered. Residues 22-37 (NPSSLSNRSPSPGRPL) show a composition bias toward low complexity. 4 helical membrane-spanning segments follow: residues 562 to 581 (WLNG…YQLW), 605 to 625 (LFAW…TTYL), 637 to 657 (VLGV…FVLS), and 672 to 692 (MVYL…FVTV). A glycan (N-linked (GlcNAc...) asparagine) is linked at Asn-712. 3 helical membrane-spanning segments follow: residues 715–735 (FFSI…ASII), 845–865 (VVLV…SSAG), and 890–910 (VVLW…MWFL).

This sequence belongs to the chitin synthase family. Class I subfamily. As to expression, mainly expressed in hyphae and conidiphores. Relatively strongly expressed in young cleistothecia and in mature ascospores, but negligible in Huelle cells.

The protein resides in the cell membrane. The protein localises to the cell septum. It localises to the cell tip. The catalysed reaction is [(1-&gt;4)-N-acetyl-beta-D-glucosaminyl](n) + UDP-N-acetyl-alpha-D-glucosamine = [(1-&gt;4)-N-acetyl-beta-D-glucosaminyl](n+1) + UDP + H(+). Its function is as follows. Polymerizes chitin, a structural polymer of the cell wall and septum, by transferring the sugar moiety of UDP-GlcNAc to the non-reducing end of the growing chitin polymer. ChsC and chsA share critical functions in hyphal wall integrity and differentiation. ChsA and chsC share also overlapping roles in septum formation. The polypeptide is Chitin synthase C (Emericella nidulans (strain FGSC A4 / ATCC 38163 / CBS 112.46 / NRRL 194 / M139) (Aspergillus nidulans)).